The chain runs to 240 residues: Sugar fermentation stimulation protein homolog (240 aa).

It belongs to the SfsA family.

This Saccharolobus islandicus (strain L.S.2.15 / Lassen #1) (Sulfolobus islandicus) protein is Sugar fermentation stimulation protein homolog.